The sequence spans 129 residues: Cytochrome c3 (129 aa).

The signal sequence occupies residues 1–22 (MRKLFFCGVLALAVAFALPVVA). Residues H44, H47, C52, C55, H56, H57, C68, C73, H74, H92, C101, C104, H105, C122, C127, and H128 each contribute to the heme c site.

Binds 4 heme c groups per subunit.

Its subcellular location is the periplasm. Functionally, participates in sulfate respiration coupled with phosphorylation by transferring electrons from the enzyme dehydrogenase to ferredoxin. The sequence is that of Cytochrome c3 from Nitratidesulfovibrio vulgaris (strain ATCC 29579 / DSM 644 / CCUG 34227 / NCIMB 8303 / VKM B-1760 / Hildenborough) (Desulfovibrio vulgaris).